A 613-amino-acid chain; its full sequence is MRPPWCPLHTPSLTPPLLLLLFLIGGGAEAEGPEDPELLVMVRGGRLRGLRLMAPRGPVSAFLGIPFAEPPVGPRRFLPPEPKRPWPGVLNATAFQSVCYQYVDTLYPGFEGTEMWNPNRELSEDCLYLNVWTPYPRPSSPTPVLVWIYGGGFYSGASSLDVYDGRFLTQAEGTVLVSMNYRVGAFGFLALPGSREAPGNVGLLDQRLALQWVQENVAAFGGDPTSVTLFGESAGAASVGMHLLSPPSRGLFHRAVLQSGAPNGPWATVGVGEARRRATLLARLVGCPPGGAGGNDTELVACLRARPAQDLVDHEWRVLPQESVFRFSFVPVVDGDFLSDTPEALINAGDFHGLQVLVGVVKDEGSYFLVYGAPGFSKDNESLISRAQFLAGVRVGVPQASDLAAEAVVLHYTDWLHPEDPARLREALSDVVGDHNVVCPVAQLAGRLAAQGARVYAYIFEHRASTLSWPLWMGVPHGYEIEFIFGLPLEPSLNYTIEERTFAQRLMRYWANFARTGDPNDPRDPKAPQWPPYTAGAQQYVSLNLRPLEVRRGLRAQACAFWNRFLPKLLSATDTLDEAERQWKAEFHRWSSYMVHWKNQFDHYSKQDRCSDL.

An N-terminal signal peptide occupies residues 1–30; the sequence is MRPPWCPLHTPSLTPPLLLLLFLIGGGAEA. N-linked (GlcNAc...) asparagine glycosylation occurs at asparagine 91. A disulfide bond links cysteine 99 and cysteine 126. Serine 233 (acyl-ester intermediate) is an active-site residue. Cysteine 287 and cysteine 302 are oxidised to a cystine. N-linked (GlcNAc...) asparagine glycosylation is present at asparagine 295. Glutamate 364 (charge relay system) is an active-site residue. Asparagine 380 carries an N-linked (GlcNAc...) asparagine glycan. A disulfide bond links cysteine 439 and cysteine 559. Histidine 477 functions as the Charge relay system in the catalytic mechanism. N-linked (GlcNAc...) asparagine glycosylation is present at asparagine 494.

The protein belongs to the type-B carboxylesterase/lipase family. Interacts with PRIMA1. The interaction with PRIMA1 is required to anchor it to the basal lamina of cells and organize into tetramers. Isoform H generates GPI-anchored dimers; disulfide linked. Isoform T generates multiple structures, ranging from monomers and dimers to collagen-tailed and hydrophobic-tailed forms, in which catalytic tetramers are associated with anchoring proteins that attach them to the basal lamina or to cell membranes. In the collagen-tailed forms, isoform T subunits are associated with a specific collagen, COLQ, which triggers the formation of isoform T tetramers, from monomers and dimers.

The protein resides in the synapse. The protein localises to the secreted. It localises to the cell membrane. The enzyme catalyses acetylcholine + H2O = choline + acetate + H(+). Its function is as follows. Terminates signal transduction at the neuromuscular junction by rapid hydrolysis of the acetylcholine released into the synaptic cleft. This Bos taurus (Bovine) protein is Acetylcholinesterase (ACHE).